An 85-amino-acid chain; its full sequence is uncharacterized protein (85 aa).

Belongs to the ycf76 family.

It localises to the plastid. The protein resides in the chloroplast. This is an uncharacterized protein from Saccharum hybrid (Sugarcane).